Reading from the N-terminus, the 71-residue chain is V-type proton ATPase subunit e (71 aa).

The Lumenal segment spans residues 1–2 (MS). Residues 3 to 23 (FFHVVFVAFVIAAIGAAGWFV) form a helical membrane-spanning segment. At 24-35 (TPKGKNQTLLRT) the chain is on the cytoplasmic side. A helical membrane pass occupies residues 36-56 (SLLLTLTCCYLMWAITYLCQL). The Lumenal segment spans residues 57-71 (HPLITPRRSDLRMEY).

This sequence belongs to the V-ATPase e1/e2 subunit family. In terms of assembly, V-ATPase is a heteromultimeric enzyme composed of a peripheral catalytic V1 complex (components A to H) attached to an integral membrane V0 proton pore complex (components: a, c, c', c'', d, e, f and VOA1).

It is found in the vacuole membrane. Functionally, subunit of the V0 complex of vacuolar(H+)-ATPase (V-ATPase), a multisubunit enzyme composed of a peripheral complex (V1) that hydrolyzes ATP and a membrane integral complex (V0) that translocates protons. V-ATPase is responsible for acidifying and maintaining the pH of intracellular compartments. This chain is V-type proton ATPase subunit e (VMA9), found in Cryptococcus neoformans var. neoformans serotype D (strain JEC21 / ATCC MYA-565) (Filobasidiella neoformans).